A 261-amino-acid chain; its full sequence is Early 39 kDa protein (261 aa).

The disordered stretch occupies residues 215–261; that stretch reads SYVPTPVSNKKRRAPPSAPKKIAKQRRDTKPPPTYVSDNTQDTNMSE. Over residues 250 to 261 the composition is skewed to polar residues; that stretch reads VSDNTQDTNMSE.

The protein is Early 39 kDa protein of Orgyia pseudotsugata multicapsid polyhedrosis virus (OpMNPV).